The sequence spans 444 residues: ATP-dependent protease ATPase subunit HslU (444 aa).

Residues Ile-18 and 60 to 65 contribute to the ATP site; that span reads GVGKTE. Residues 143 to 163 are disordered; sequence WGEVENHDSHSSTRQAFRKKL. Residues Asp-257, Glu-322, and Arg-394 each coordinate ATP.

It belongs to the ClpX chaperone family. HslU subfamily. As to quaternary structure, a double ring-shaped homohexamer of HslV is capped on each side by a ring-shaped HslU homohexamer. The assembly of the HslU/HslV complex is dependent on binding of ATP.

It is found in the cytoplasm. Its function is as follows. ATPase subunit of a proteasome-like degradation complex; this subunit has chaperone activity. The binding of ATP and its subsequent hydrolysis by HslU are essential for unfolding of protein substrates subsequently hydrolyzed by HslV. HslU recognizes the N-terminal part of its protein substrates and unfolds these before they are guided to HslV for hydrolysis. The polypeptide is ATP-dependent protease ATPase subunit HslU (Haemophilus influenzae (strain 86-028NP)).